Reading from the N-terminus, the 379-residue chain is Cytochrome bd-I ubiquinol oxidase subunit 2 (379 aa).

Met-1 is modified (N-formylmethionine). Residues Met-1–Arg-8 lie on the Cytoplasmic side of the membrane. A helical transmembrane segment spans residues Phe-9 to Phe-28. At Asp-29–Tyr-79 the chain is on the periplasmic side. The chain crosses the membrane as a helical span at residues Ala-80 to Phe-99. At Arg-100–Gly-122 the chain is on the cytoplasmic side. Residues Ile-123 to Leu-142 traverse the membrane as a helical segment. Residues Gln-143–Leu-164 lie on the Periplasmic side of the membrane. The helical transmembrane segment at Leu-165–Gly-184 threads the bilayer. Topologically, residues Ala-185–Gln-205 are cytoplasmic. The chain crosses the membrane as a helical span at residues Val-206–Gly-225. The Periplasmic segment spans residues Ile-226–Thr-262. A helical transmembrane segment spans residues Pro-263 to Thr-282. At Ala-283 to Phe-292 the chain is on the cytoplasmic side. The helical transmembrane segment at Val-293–Pro-312 threads the bilayer. The Periplasmic segment spans residues Phe-313–Thr-336. Residues Leu-337–Ala-356 form a helical membrane-spanning segment. Residues Trp-357–Tyr-379 lie on the Cytoplasmic side of the membrane.

The protein belongs to the cytochrome ubiquinol oxidase subunit 2 family. In terms of assembly, heterodimer of subunits I and II. It depends on heme b as a cofactor. Heme d cis-diol serves as cofactor.

It localises to the cell inner membrane. The enzyme catalyses 2 a ubiquinol + O2(in) + 4 H(+)(in) = 2 a ubiquinone + 2 H2O(in) + 4 H(+)(out). It participates in energy metabolism; oxidative phosphorylation. In terms of biological role, a terminal oxidase that produces a proton motive force by the vectorial transfer of protons across the inner membrane. It is the component of the aerobic respiratory chain of E.coli that predominates when cells are grown at low aeration. Generates a proton motive force using protons and electrons from opposite sides of the membrane to generate H(2)O, transferring 1 proton/electron. This Escherichia coli O157:H7 protein is Cytochrome bd-I ubiquinol oxidase subunit 2 (cydB).